Here is a 614-residue protein sequence, read N- to C-terminus: UvrABC system protein C (614 aa).

The GIY-YIG domain maps to 19 to 97 (SLPGCYLWKN…IKKYNPKFNV (79 aa)). A UVR domain is found at 208–243 (ERLVADLKKAMMDASSKMEYERAGFLKQRIEKINQL).

This sequence belongs to the UvrC family. As to quaternary structure, interacts with UvrB in an incision complex.

It localises to the cytoplasm. Functionally, the UvrABC repair system catalyzes the recognition and processing of DNA lesions. UvrC both incises the 5' and 3' sides of the lesion. The N-terminal half is responsible for the 3' incision and the C-terminal half is responsible for the 5' incision. The sequence is that of UvrABC system protein C from Leptospira biflexa serovar Patoc (strain Patoc 1 / Ames).